Reading from the N-terminus, the 458-residue chain is Histone acetyltransferase Tip60 homolog (458 aa).

Positions Met-1–Pro-24 are disordered. The Tudor-knot domain occupies Val-30 to Leu-86. A disordered region spans residues Lys-94–Ile-123. Basic and acidic residues predominate over residues His-101–Lys-116. Residues Thr-168–Pro-446 enclose the MYST-type HAT domain. The C2HC MYST-type zinc-finger motif lies at Ile-201–Met-226. Lys-268 bears the N6-acetyllysine; by autocatalysis mark. Acetyl-CoA is bound by residues Ile-311–Val-313 and Gln-318–Ser-324. Glu-344 (proton donor/acceptor) is an active-site residue. Positions 348 and 357 each coordinate acetyl-CoA.

This sequence belongs to the MYST (SAS/MOZ) family. Interacts with transcription-associated protein trr-1. Probably a component of a complex with histone acetyltransferase (HAT) activity, at least composed of mys-1 and trr-1. Post-translationally, autoacetylation at Lys-268 is required for binding histones with high affinity and for proper function.

The protein resides in the nucleus. The catalysed reaction is L-lysyl-[protein] + acetyl-CoA = N(6)-acetyl-L-lysyl-[protein] + CoA + H(+). Its function is as follows. Probable catalytic subunit of the Tip60 chromatin-remodeling complex. Plays a role in acetylation of nucleosomal histone H4 and perhaps also H2A, probably acting as a component of the Tip60 histone acetyltransferase complex. Acts in the determination of vulval and distal tip cell (DTC) precursor cell fates. Involved in the positive regulation of transcription factor daf-16, probably acting by histone acetylation; thereby modulating stress resistance. This Caenorhabditis elegans protein is Histone acetyltransferase Tip60 homolog.